The primary structure comprises 107 residues: ATPase inhibitor, mitochondrial (107 aa).

The N-terminal 25 residues, 1–25 (MAGSALAVRARLGVWGMRVLQTRGF), are a transit peptide targeting the mitochondrion. The tract at residues 25–58 (FGSDSSESMDSGAGSIREAGGAFGKREKAEEDRY) is disordered. An N-terminal inhibitory region region spans residues 26 to 52 (GSDSSESMDSGAGSIREAGGAFGKREK). A Phosphoserine modification is found at serine 39. The segment covering 48 to 58 (GKREKAEEDRY) has biased composition (basic and acidic residues). Residues 60–107 (REKTREQLAALKKHHEDEIDHHSKEIERLQKQIERHKKKIKYLKNSEH) adopt a coiled-coil conformation. An antiparallel alpha-helical coiled coil region region spans residues 74–106 (HEDEIDHHSKEIERLQKQIERHKKKIKYLKNSE). Lysine 103 carries the post-translational modification N6-succinyllysine.

This sequence belongs to the ATPase inhibitor family. In terms of assembly, homodimer; represents the active form and is present at a pH value below 6.5. Homotetramer; represents the inactive form and is present at a pH value above 7.0.

It is found in the mitochondrion. In terms of biological role, endogenous F(1)F(o)-ATPase inhibitor limiting ATP depletion when the mitochondrial membrane potential falls below a threshold and the F(1)F(o)-ATP synthase starts hydrolyzing ATP to pump protons out of the mitochondrial matrix. Required to avoid the consumption of cellular ATP when the F(1)F(o)-ATP synthase enzyme acts as an ATP hydrolase. Indirectly acts as a regulator of heme synthesis in erythroid tissues: regulates heme synthesis by modulating the mitochondrial pH and redox potential, allowing FECH to efficiently catalyze the incorporation of iron into protoporphyrin IX to produce heme. In Rattus norvegicus (Rat), this protein is ATPase inhibitor, mitochondrial.